We begin with the raw amino-acid sequence, 538 residues long: MISGNILNVFTGDIYPAEIEVAGGRVRCVRSISGNFSDIIIPGFIDAHLHIESSMLIPSSFAAAAIPHGTVSAISDPHEIANVMGVDGVRFMIDDAAATPMKFYFTAPSCVPATPFETAGAEITARGIEELLRMDSVVALGEMMNFPAVIAGDDGVMAKIKAARDLNMPVDGHAPLLSGDELCTYIGAGISTDHECVSPEEVLEKRRLGMKIMAREGSSARNLRDLAAAGCDFLVSDDIHPADLLEGHMDRILRRAVDYGIDPVSAVQMVTINPAEHYGLSTGAIAPGWDADFVVVDSLRDFNVKRVYIDGRPVADRGRYLIRRSGGTRAPPRKLEVPDFPVERLNIRAEGDEATVRVIDVLDGQLITEELIATLEVEDGTVQADTSSDILRVSVLDRYGRGNISSGFVHGFGLQEGAIASTVAHDSHNLIVVGVDPELMKRAVDILKKAGGGLVAVSGDDHRVLQLPVAGLMSDGDVFEVADGFENLNTFTEQLGSRLSAPFMTMSFLSLLVIPRLKIGDRGLFDVEKFEIKNLMEM.

This sequence belongs to the metallo-dependent hydrolases superfamily. Adenine deaminase family. Mn(2+) is required as a cofactor.

It carries out the reaction adenine + H2O + H(+) = hypoxanthine + NH4(+). This Methanothermobacter thermautotrophicus (strain ATCC 29096 / DSM 1053 / JCM 10044 / NBRC 100330 / Delta H) (Methanobacterium thermoautotrophicum) protein is Adenine deaminase.